The following is a 165-amino-acid chain: Large ribosomal subunit protein uL11 (165 aa).

Arginine 67 bears the N5-methylarginine mark.

This sequence belongs to the universal ribosomal protein uL11 family. In terms of assembly, component of the large ribosomal subunit (LSU). Mature N.crassa ribosomes consist of a small (40S) and a large (60S) subunit. The 40S small subunit contains 1 molecule of ribosomal RNA (18S rRNA) and at least 32 different proteins. The large 60S subunit contains 3 rRNA molecules (26S, 5.8S and 5S rRNA) and at least 42 different proteins.

The protein resides in the cytoplasm. Component of the ribosome, a large ribonucleoprotein complex responsible for the synthesis of proteins in the cell. The small ribosomal subunit (SSU) binds messenger RNAs (mRNAs) and translates the encoded message by selecting cognate aminoacyl-transfer RNA (tRNA) molecules. The large subunit (LSU) contains the ribosomal catalytic site termed the peptidyl transferase center (PTC), which catalyzes the formation of peptide bonds, thereby polymerizing the amino acids delivered by tRNAs into a polypeptide chain. The nascent polypeptides leave the ribosome through a tunnel in the LSU and interact with protein factors that function in enzymatic processing, targeting, and the membrane insertion of nascent chains at the exit of the ribosomal tunnel. The protein is Large ribosomal subunit protein uL11 (rpl-12) of Neurospora crassa (strain ATCC 24698 / 74-OR23-1A / CBS 708.71 / DSM 1257 / FGSC 987).